We begin with the raw amino-acid sequence, 1476 residues long: SH3 and multiple ankyrin repeat domains protein 2 (1476 aa).

Residues 66–76 show a composition bias toward polar residues; sequence LSPQLLQQTPS. Residues 66 to 134 form a disordered region; that stretch reads LSPQLLQQTP…GANKDSLSTF (69 aa). Residues 147–206 form the SH3 domain; it reads VPGRLFVAVKPYQPQVDGEIPLHRGDRVKVLSIGEGGFWEGSARGHIGWFPAECVEEVQC. Phosphoserine is present on Val162. Positions 247-341 constitute a PDZ domain; that stretch reads TVVLQKKDNE…HLILKVVTVT (95 aa). Position 372 is a phosphoserine (Ser372). A disordered region spans residues 391 to 412; it reads RKKKDKPEEIVPASKPSRTAEN. Ser456 is modified (phosphoserine). Thr485 is modified (phosphothreonine). The tract at residues 503 to 533 is disordered; that stretch reads LSMPDTSEDIPPPPQSVPPSPPPPSPTTYNC. Pro residues predominate over residues 512–528; the sequence is IPPPPQSVPPSPPPPSP. A Phosphoserine modification is found at Ser586. 3 disordered regions span residues 659 to 916, 946 to 983, and 1057 to 1153; these read TIIV…KDRR, VPMAGPPLEEEEDREDGDTKPDHSPSTVPEGVPKTEGA, and PALA…ESMD. The span at 666-678 shows a compositional bias: low complexity; the sequence is STSSSGKSSQGSS. Residues 711–722 are compositionally biased toward basic and acidic residues; sequence VRDREKRLEARR. Ser724 bears the Phosphoserine mark. Gly residues predominate over residues 783-795; it reads LGGGEAGAQGEAG. The segment covering 833-846 has biased composition (low complexity); it reads RLLDPSSPLALALS. Basic and acidic residues-rich tracts occupy residues 847–868 and 899–916; these read ARDRAMQESQQGHKGEAPKADL and RRQETENKYETDLGKDRR. Residue Thr903 is modified to Phosphothreonine. Residues 1070–1085 are compositionally biased toward polar residues; the sequence is TSQPPTLNSSQPANST. A compositionally biased stretch (basic and acidic residues) spans 1119–1130; that stretch reads VDSRSSSDHHLE. Residues 1131–1151 are compositionally biased toward low complexity; the sequence is TTSTISTVSSISTLSSEGGES. The SH3-binding motif lies at 1169 to 1175; sequence PPVPPKP. Disordered regions lie at residues 1195 to 1216 and 1260 to 1403; these read EDTDGFVIPPPAPPPPPGSAQA and NRGK…ISNK. The span at 1202 to 1212 shows a compositional bias: pro residues; sequence IPPPAPPPPPG. Residues 1291 to 1305 are compositionally biased toward low complexity; it reads STVSGTRSTTVTFTV. O-linked (GlcNAc) threonine glycosylation is present at Thr1292. The span at 1307–1317 shows a compositional bias: polar residues; the sequence is PGTSQPITLQS. Ser1334 and Ser1338 each carry phosphoserine. The segment covering 1364–1375 has biased composition (polar residues); that stretch reads LSDVFSLPSQSP. Positions 1387–1401 are enriched in low complexity; that stretch reads RSRSPSPSILQQPIS. In terms of domain architecture, SAM spans 1413–1476; it reads WTKPDVADWL…ERALKQLLDR (64 aa).

It belongs to the SHANK family. In terms of assembly, is part of a complex with DLG4/PSD-95 and DLGAP1/GKAP. Interacts with CTTN/cortactin SH3 domain, DLGAP1/GKAP and alpha-latrotoxin receptor 1. Interacts with DNM2, DBNL, GRID2, BAIAP2, SLC9A3, PLCB3 and CFTR. Interacts (via proline-rich region) with PDE4D. Interacts with ABI1 (via SH3 domain). As to expression, detected in brain (at protein level), where it is highly expressed in Purkinje cells.

The protein resides in the apical cell membrane. It localises to the cytoplasm. It is found in the synapse. Its subcellular location is the postsynaptic density. The protein localises to the cell projection. The protein resides in the dendritic spine. It localises to the growth cone. In terms of biological role, seems to be an adapter protein in the postsynaptic density (PSD) of excitatory synapses that interconnects receptors of the postsynaptic membrane including NMDA-type and metabotropic glutamate receptors, and the actin-based cytoskeleton. May play a role in the structural and functional organization of the dendritic spine and synaptic junction. In Mus musculus (Mouse), this protein is SH3 and multiple ankyrin repeat domains protein 2 (Shank2).